A 255-amino-acid polypeptide reads, in one-letter code: MYSLQVEDIHKRYGSHEVLRGVSLRAGKGDVISIIGSSGSGKSTFLRCVNFLEKPCAGHIRVGDEELRTRPGALGELRAADPRQLQRIRSRLAMVFQHFNLWSHLTVLENVVECPVNVLRMNRDDAVARARHYLAKVGLAEKVERQYPCELSGGQQQRVAIARALAMEPQVMLFDEPTSALDPELVGEVLKVMQQLAEEGRTMVLVTHEMAFARQVSSHVIFLHQGVIEEEGTPDQVFGAPRSERLRQFLAGNLK.

One can recognise an ABC transporter domain in the interval 4–250; the sequence is LQVEDIHKRY…PRSERLRQFL (247 aa). Residues Ser38, Gly39, Gly41, Lys42, Ser43, and Thr44 each contribute to the ATP site.

It belongs to the ABC transporter superfamily. As to quaternary structure, the HisPMQJ complex is composed of two ATP-binding proteins (HisP), two transmembrane proteins (HisM and HisQ) and a solute-binding protein (HisJ).

The protein localises to the cell inner membrane. It catalyses the reaction a polar amino acid(out) + ATP + H2O = a polar amino acid(in) + ADP + phosphate + H(+). The enzyme catalyses L-histidine(out) + ATP + H2O = L-histidine(in) + ADP + phosphate + H(+). In terms of biological role, part of the ABC transporter complex HisPMQJ involved in histidine transport. Shows ATPase activity. Responsible for energy coupling to the transport system. This Pseudomonas aeruginosa (strain ATCC 15692 / DSM 22644 / CIP 104116 / JCM 14847 / LMG 12228 / 1C / PRS 101 / PAO1) protein is Histidine transport ATP-binding protein HisP (hisP).